The primary structure comprises 330 residues: Ketol-acid reductoisomerase (NADP(+)) (330 aa).

The KARI N-terminal Rossmann domain occupies 1–182 (MKKVYYDQDA…GCTRAGVFET (182 aa)). NADP(+) is bound by residues 25 to 28 (YGSQ), serine 51, serine 53, and 83 to 86 (DQIQ). Histidine 108 is an active-site residue. Position 134 (glycine 134) interacts with NADP(+). The 146-residue stretch at 183 to 328 (TFKEETETDL…AELRQMMPWL (146 aa)) folds into the KARI C-terminal knotted domain. Residues aspartate 191, glutamate 195, glutamate 227, and glutamate 231 each coordinate Mg(2+). Serine 252 is a substrate binding site.

It belongs to the ketol-acid reductoisomerase family. Mg(2+) is required as a cofactor.

The catalysed reaction is (2R)-2,3-dihydroxy-3-methylbutanoate + NADP(+) = (2S)-2-acetolactate + NADPH + H(+). It carries out the reaction (2R,3R)-2,3-dihydroxy-3-methylpentanoate + NADP(+) = (S)-2-ethyl-2-hydroxy-3-oxobutanoate + NADPH + H(+). It participates in amino-acid biosynthesis; L-isoleucine biosynthesis; L-isoleucine from 2-oxobutanoate: step 2/4. The protein operates within amino-acid biosynthesis; L-valine biosynthesis; L-valine from pyruvate: step 2/4. In terms of biological role, involved in the biosynthesis of branched-chain amino acids (BCAA). Catalyzes an alkyl-migration followed by a ketol-acid reduction of (S)-2-acetolactate (S2AL) to yield (R)-2,3-dihydroxy-isovalerate. In the isomerase reaction, S2AL is rearranged via a Mg-dependent methyl migration to produce 3-hydroxy-3-methyl-2-ketobutyrate (HMKB). In the reductase reaction, this 2-ketoacid undergoes a metal-dependent reduction by NADPH to yield (R)-2,3-dihydroxy-isovalerate. In Carboxydothermus hydrogenoformans (strain ATCC BAA-161 / DSM 6008 / Z-2901), this protein is Ketol-acid reductoisomerase (NADP(+)).